Consider the following 571-residue polypeptide: Proline--tRNA ligase (571 aa).

The protein belongs to the class-II aminoacyl-tRNA synthetase family. ProS type 1 subfamily. Homodimer.

It is found in the cytoplasm. It catalyses the reaction tRNA(Pro) + L-proline + ATP = L-prolyl-tRNA(Pro) + AMP + diphosphate. Catalyzes the attachment of proline to tRNA(Pro) in a two-step reaction: proline is first activated by ATP to form Pro-AMP and then transferred to the acceptor end of tRNA(Pro). As ProRS can inadvertently accommodate and process non-cognate amino acids such as alanine and cysteine, to avoid such errors it has two additional distinct editing activities against alanine. One activity is designated as 'pretransfer' editing and involves the tRNA(Pro)-independent hydrolysis of activated Ala-AMP. The other activity is designated 'posttransfer' editing and involves deacylation of mischarged Ala-tRNA(Pro). The misacylated Cys-tRNA(Pro) is not edited by ProRS. This is Proline--tRNA ligase from Shewanella baltica (strain OS155 / ATCC BAA-1091).